Consider the following 71-residue polypeptide: Small ribosomal subunit protein bS21 (71 aa).

The protein belongs to the bacterial ribosomal protein bS21 family.

The sequence is that of Small ribosomal subunit protein bS21 from Blochmanniella pennsylvanica (strain BPEN).